Reading from the N-terminus, the 482-residue chain is Cysteine--tRNA ligase (482 aa).

C29 is a binding site for Zn(2+). A 'HIGH' region motif is present at residues 31 to 41 (PTVYDSAHVGH). Zn(2+) is bound by residues C210, H235, and E239. The 'KMSKS' region motif lies at 272–276 (KMSKS). K275 contacts ATP.

This sequence belongs to the class-I aminoacyl-tRNA synthetase family. As to quaternary structure, monomer. It depends on Zn(2+) as a cofactor.

The protein resides in the cytoplasm. It catalyses the reaction tRNA(Cys) + L-cysteine + ATP = L-cysteinyl-tRNA(Cys) + AMP + diphosphate. The chain is Cysteine--tRNA ligase from Anaeromyxobacter sp. (strain Fw109-5).